A 67-amino-acid chain; its full sequence is uncharacterized protein (67 aa).

2 consecutive transmembrane segments (helical) span residues 10-30 and 40-60; these read EFFI…IIMW and LMVG…WMVF.

It belongs to the plectrovirus ORF10 family.

The protein localises to the host membrane. This is an uncharacterized protein from Spiroplasma melliferum (SpV1).